A 260-amino-acid chain; its full sequence is WUSCHEL-related homeobox 2 (260 aa).

The homeobox; WUS-type DNA-binding region spans alanine 10–glutamine 74.

Belongs to the WUS homeobox family.

Its subcellular location is the nucleus. In terms of biological role, probable transcription factor involved in embryonic patterning. Required for apical embryo development after fertilization. Its specific localization to the apical daughter cell of the zygote, while WOX8 is confined to the basal cell, suggests that the asymmetric division of the plant zygote separates determinants of apical and basal cell fates. This is WUSCHEL-related homeobox 2 (WOX2) from Arabidopsis thaliana (Mouse-ear cress).